Consider the following 359-residue polypeptide: ELAV-like protein 2 (359 aa).

The segment at M1–T39 is disordered. RRM domains follow at residues T39–P117 and A125–N205. S221 carries the post-translational modification Phosphoserine. An RRM 3 domain is found at W276 to N354.

Belongs to the RRM elav family. In terms of assembly, interacts with IGF2BP1. Interacts with MAP1B light chain LC1.

Functionally, RNA-binding protein that binds to the 3' untranslated region (3'UTR) of target mRNAs. Seems to recognize a GAAA motif. Can bind to its own 3'UTR, the FOS 3'UTR and the ID 3'UTR. The protein is ELAV-like protein 2 (Elavl2) of Rattus norvegicus (Rat).